Reading from the N-terminus, the 1166-residue chain is Peroxisomal ATPase PEX6 (1166 aa).

It belongs to the AAA ATPase family. In terms of assembly, interacts with PEX1; forming the PEX1-PEX6 AAA ATPase complex, which is composed of a heterohexamer formed by a trimer of PEX1-PEX6 dimers.

Its subcellular location is the membrane. It catalyses the reaction ATP + H2O = ADP + phosphate + H(+). Functionally, component of the PEX1-PEX6 AAA ATPase complex involved in peroxisome biosynthesis. The complex acts as a protein dislocase complex that mediates the ATP-dependent extraction of the PEX5 receptor from peroxisomal membranes, an essential step for PEX5 recycling. Specifically recognizes PEX5 monoubiquitinated at 'Cys-6', and pulls it out of the peroxisome lumen through the PEX2-PEX10-PEX12 retrotranslocation channel. Extraction by the PEX1-PEX6 AAA ATPase complex is accompanied by unfolding of the TPR repeats and release of bound cargo from PEX5. In Komagataella phaffii (strain GS115 / ATCC 20864) (Yeast), this protein is Peroxisomal ATPase PEX6.